The chain runs to 74 residues: Cecropin-P2 (74 aa).

Positions 1 to 13 (MIFIYLLVQTAES) are cleaved as a signal peptide. The propeptide at 45–74 (RRRFVVQQDTISPRLEVDERFLPNSVQEQI) is removed in mature form.

It belongs to the cecropin family. Expressed in the body wall, intestine, uterus and ovary.

It is found in the secreted. Has antibacterial activity against several Gram-positive and Gram-negative bacteria. Is weakly active against yeasts. Acts by a nonpore mechanism. This is Cecropin-P2 (ASCEC-2) from Ascaris suum (Pig roundworm).